The sequence spans 767 residues: ATPase family gene 2 protein homolog B (767 aa).

At methionine 1 the chain carries N-acetylmethionine. Residues 241-248 (GPPGVGKT) and 507-514 (GPPGCAKT) each bind ATP.

This sequence belongs to the AAA ATPase family. AFG2 subfamily. As to quaternary structure, part of the 55LCC heterohexameric ATPase complex composed at least of AIRIM, AFG2A, AFG2B and CINP. Associates with pre-60S ribosomal particles.

The protein resides in the cytoplasm. The protein localises to the cytoskeleton. It localises to the spindle. Its subcellular location is the nucleus. The catalysed reaction is ATP + H2O = ADP + phosphate + H(+). In the context of 55LCC heterohexameric ATPase complex, the ATPase activity is stimulated by DNA binding and inhibited in presence of RNA. Its function is as follows. ATP-dependent chaperone part of the 55LCC heterohexameric ATPase complex which is chromatin-associated and promotes replisome proteostasis to maintain replication fork progression and genome stability. Required for replication fork progression, sister chromatid cohesion, and chromosome stability. The ATPase activity is specifically enhanced by replication fork DNA and is coupled to cysteine protease-dependent cleavage of replisome substrates in response to replication fork damage. Uses ATPase activity to process replisome substrates in S-phase, facilitating their proteolytic turnover from chromatin to ensure DNA replication and mitotic fidelity. Plays an essential role in the cytoplasmic maturation steps of pre-60S ribosomal particles by promoting the release of shuttling protein RSL24D1/RLP24 from the pre-ribosomal particles. This chain is ATPase family gene 2 protein homolog B (AFG2B), found in Bos taurus (Bovine).